The chain runs to 200 residues: dTTP/UTP pyrophosphatase (200 aa).

Asp81 acts as the Proton acceptor in catalysis.

It belongs to the Maf family. YhdE subfamily. The cofactor is a divalent metal cation.

The protein localises to the cytoplasm. It catalyses the reaction dTTP + H2O = dTMP + diphosphate + H(+). The catalysed reaction is UTP + H2O = UMP + diphosphate + H(+). Functionally, nucleoside triphosphate pyrophosphatase that hydrolyzes dTTP and UTP. May have a dual role in cell division arrest and in preventing the incorporation of modified nucleotides into cellular nucleic acids. The chain is dTTP/UTP pyrophosphatase from Albidiferax ferrireducens (strain ATCC BAA-621 / DSM 15236 / T118) (Rhodoferax ferrireducens).